A 71-amino-acid chain; its full sequence is uncharacterized protein (71 aa).

This is an uncharacterized protein from Thermoproteus tenax virus 1 (strain KRA1) (TTV1).